Reading from the N-terminus, the 436-residue chain is GTPase Der (436 aa).

EngA-type G domains follow at residues 4-165 and 172-347; these read NVIA…NFDS and FKLS…ENLE. GTP contacts are provided by residues 10 to 17, 57 to 61, 119 to 122, 178 to 185, 225 to 229, and 290 to 293; these read GKPNVGKS, DTGGI, NKLD, GQPNSGKS, DTAGI, and NKWD. Positions 348–432 constitute a KH-like domain; the sequence is REIKPSVLTN…PINIIFKNKS (85 aa).

It belongs to the TRAFAC class TrmE-Era-EngA-EngB-Septin-like GTPase superfamily. EngA (Der) GTPase family. Associates with the 50S ribosomal subunit.

In terms of biological role, GTPase that plays an essential role in the late steps of ribosome biogenesis. This is GTPase Der from Mycoplasmopsis agalactiae (strain NCTC 10123 / CIP 59.7 / PG2) (Mycoplasma agalactiae).